We begin with the raw amino-acid sequence, 314 residues long: Ribosomal RNA small subunit methyltransferase H (314 aa).

S-adenosyl-L-methionine-binding positions include 34 to 36, D53, F82, D103, and Q110; that span reads GGH.

It belongs to the methyltransferase superfamily. RsmH family.

Its subcellular location is the cytoplasm. The enzyme catalyses cytidine(1402) in 16S rRNA + S-adenosyl-L-methionine = N(4)-methylcytidine(1402) in 16S rRNA + S-adenosyl-L-homocysteine + H(+). Functionally, specifically methylates the N4 position of cytidine in position 1402 (C1402) of 16S rRNA. This is Ribosomal RNA small subunit methyltransferase H from Levilactobacillus brevis (strain ATCC 367 / BCRC 12310 / CIP 105137 / JCM 1170 / LMG 11437 / NCIMB 947 / NCTC 947) (Lactobacillus brevis).